The following is a 392-amino-acid chain: tRNA (guanine-N(7)-)-methyltransferase (392 aa).

S-adenosyl-L-methionine is bound by residues Glu-123, Glu-148, and Asp-175. Substrate contacts are provided by Lys-201 and Asp-231.

This sequence belongs to the class I-like SAM-binding methyltransferase superfamily. TrmB family.

It carries out the reaction guanosine(46) in tRNA + S-adenosyl-L-methionine = N(7)-methylguanosine(46) in tRNA + S-adenosyl-L-homocysteine. Its pathway is tRNA modification; N(7)-methylguanine-tRNA biosynthesis. Catalyzes the formation of N(7)-methylguanine at position 46 (m7G46) in tRNA. In Campylobacter jejuni subsp. jejuni serotype O:2 (strain ATCC 700819 / NCTC 11168), this protein is tRNA (guanine-N(7)-)-methyltransferase.